A 54-amino-acid chain; its full sequence is Small ribosomal subunit protein uS14 (54 aa).

Zn(2+) contacts are provided by Cys-19, Cys-22, Cys-37, and Cys-40.

The protein belongs to the universal ribosomal protein uS14 family. Zinc-binding uS14 subfamily. In terms of assembly, part of the 30S ribosomal subunit. Zn(2+) serves as cofactor.

Its function is as follows. Binds 16S rRNA, required for the assembly of 30S particles. The polypeptide is Small ribosomal subunit protein uS14 (Aeropyrum pernix (strain ATCC 700893 / DSM 11879 / JCM 9820 / NBRC 100138 / K1)).